Reading from the N-terminus, the 61-residue chain is Sodium/potassium-transporting ATPase subunit gamma (61 aa).

A helical transmembrane segment spans residues 24–44 (KGGLIFAAIAFVVGMLIIFSG).

Belongs to the FXYD family. As to quaternary structure, regulatory subunit of the sodium/potassium-transporting ATPase which is composed of a catalytic alpha subunit, an auxiliary non-catalytic beta subunit and an additional regulatory subunit.

It is found in the membrane. May be involved in forming the receptor site for cardiac glycoside binding or may modulate the transport function of the sodium ATPase. In Xenopus laevis (African clawed frog), this protein is Sodium/potassium-transporting ATPase subunit gamma (fxyd2).